A 324-amino-acid polypeptide reads, in one-letter code: Fructose-1,6-bisphosphatase class 1 (324 aa).

Residues glutamate 88, aspartate 107, leucine 109, and aspartate 110 each contribute to the Mg(2+) site. Residues 110 to 113, asparagine 199, and lysine 265 each bind substrate; that span reads DGSS. Glutamate 271 serves as a coordination point for Mg(2+).

The protein belongs to the FBPase class 1 family. Homotetramer. Mg(2+) serves as cofactor.

It localises to the cytoplasm. The catalysed reaction is beta-D-fructose 1,6-bisphosphate + H2O = beta-D-fructose 6-phosphate + phosphate. Its pathway is carbohydrate biosynthesis; gluconeogenesis. This is Fructose-1,6-bisphosphatase class 1 from Neisseria meningitidis serogroup A / serotype 4A (strain DSM 15465 / Z2491).